The chain runs to 807 residues: Maternal DNA replication licensing factor mcm3 (807 aa).

Residues 295-502 (IFEHLSKSLA…NDQEIADHVL (208 aa)) form the MCM domain. Residue 345–352 (GDPSVAKS) participates in ATP binding. An Arginine finger motif is present at residues 477 to 480 (SRFD). A compositionally biased stretch (basic and acidic residues) spans 664-673 (KTDKDLHDEN). The interval 664-741 (KTDKDLHDEN…QDGKRSLSQN (78 aa)) is disordered. Positions 707-723 (FSEQDSSLNENLSQSLR) are enriched in polar residues. Positions 727–741 (KKAESQDGKRSLSQN) are enriched in basic and acidic residues.

Belongs to the MCM family. Component of the mcm2-7 complex (RLF-M). The complex forms a toroidal hexameric ring with the proposed subunit order mcm2-mcm6-mcm4-mcm7-mcm3-mcm5. The heterodimer of mmcm3/mcm5 interacts with mcm4, mmcm6, mcm7 and weakly with mcm2. Interacts with mcm7, though this interaction may not be direct, and remains in a complex with mcm7 throughout the cell cycle. Component of the CMG helicase complex, composed of the mcm2-7 complex, the GINS complex and cdc45.

The protein resides in the nucleus. Its subcellular location is the chromosome. The enzyme catalyses ATP + H2O = ADP + phosphate + H(+). Its function is as follows. Acts as a component of the mcm2-7 complex (mcm complex) which is the putative replicative helicase essential for 'once per cell cycle' DNA replication initiation and elongation in eukaryotic cells. The active ATPase sites in the mcm2-7 ring are formed through the interaction surfaces of two neighboring subunits such that a critical structure of a conserved arginine finger motif is provided in trans relative to the ATP-binding site of the Walker A box of the adjacent subunit. The six ATPase active sites, however, are likely to contribute differentially to the complex helicase activity. The existence of maternal and zygotic forms of mcm3 and mcm6 suggests that specific forms of mcm2-7 complexes may be used during different stages of development. This Xenopus laevis (African clawed frog) protein is Maternal DNA replication licensing factor mcm3 (mmcm3).